The chain runs to 586 residues: Probable transporter AQR1 (586 aa).

Disordered stretches follow at residues 1–44 (MSRS…FEGA) and 61–82 (EGDLDSETSSHSSDDKVDPTQQ). Residues 1 to 99 (MSRSNSIYTE…PYTLLSYGQK (99 aa)) are Extracellular-facing. The span at 19–40 (NEQHLTREYTKPDGQTKSEKLN) shows a compositional bias: basic and acidic residues. A helical membrane pass occupies residues 100-120 (WGMVAILTMCGFWSSLGSPIY). The Cytoplasmic portion of the chain corresponds to 121–139 (YPALRQLEKQFNVDENMVN). Residues 140–160 (VTVVVYLLFQGISPTVSGGLA) form a helical membrane-spanning segment. Residues 161–166 (DCFGRR) lie on the Extracellular side of the membrane. A helical membrane pass occupies residues 167–187 (PIILAGMLIYVIASIGLACAP). Ser188 is a topological domain (cytoplasmic). A helical transmembrane segment spans residues 189–209 (YGVIIFLRCIQSIGISPTIAI). The Extracellular segment spans residues 210-225 (SSGVVGDFTLKHERGT). A helical membrane pass occupies residues 226-246 (FVGATSGFVLLGQCFGSLIGA). Topologically, residues 247–255 (VLTARWDWR) are cytoplasmic. Residues 256-276 (AIFWFLTIGCGSCFLIAFLIL) form a helical membrane-spanning segment. At 277–334 (PETKRTIAGNLSIKPKRFINRAPIFLLGPVRRRFKYDNPDYETLDPTIPKLDLSSAGK) the chain is on the extracellular side. A helical membrane pass occupies residues 335 to 355 (ILVLPEIILSLFPSGLLFAMW). Residues 356–374 (TLMLSSISSGLSVAPYNYH) are Cytoplasmic-facing. Residues 375–395 (LVIIGVCYLPGGIGGLMGSFF) traverse the membrane as a helical segment. The Extracellular portion of the chain corresponds to 396–433 (TGRIIDMYFKRKIKKFEQDKANGLIPQDAEINMFKVRL). A helical transmembrane segment spans residues 434 to 454 (VCLLPQNFLAVVAYLLFGWSI). Residues 455-459 (DKGWR) lie on the Cytoplasmic side of the membrane. Residues 460 to 480 (IESILITSFVCSYCAMSTLST) traverse the membrane as a helical segment. The Extracellular portion of the chain corresponds to 481–523 (STTLLVDLYPTKSSTASSCFNFVRCSLSTIFMGCFAKMKAAMT). Residues 524 to 544 (VGGTFTFLCALVFFFNFLMFI) traverse the membrane as a helical segment. Residues 545–586 (PMKYGMKWREDRLLKQQRQSWLNTLAVKAKKGTKRDQNDNHN) are Cytoplasmic-facing.

This sequence belongs to the major facilitator superfamily. CAR1 family.

The protein localises to the membrane. Its function is as follows. Probable transporter that confers resistance to short-chain monocarboxylic acids and quinidine. This Saccharomyces cerevisiae (strain ATCC 204508 / S288c) (Baker's yeast) protein is Probable transporter AQR1 (AQR1).